The primary structure comprises 96 residues: Large ribosomal subunit protein uL23 (96 aa).

This sequence belongs to the universal ribosomal protein uL23 family. As to quaternary structure, part of the 50S ribosomal subunit. Contacts protein L29, and trigger factor when it is bound to the ribosome.

In terms of biological role, one of the early assembly proteins it binds 23S rRNA. One of the proteins that surrounds the polypeptide exit tunnel on the outside of the ribosome. Forms the main docking site for trigger factor binding to the ribosome. This Endomicrobium trichonymphae protein is Large ribosomal subunit protein uL23.